The primary structure comprises 145 residues: Cytochrome b (145 aa).

A helical membrane pass occupies residues 38–58; that stretch reads FFALHFLLPFVLAALVIMHLI. Heme b is bound by residues H42 and H56. H61 contributes to the a ubiquinone binding site. A helical membrane pass occupies residues 85–105; the sequence is FVFKDLVTVFIFFIVLSVFVF.

It belongs to the cytochrome b family. In terms of assembly, fungal cytochrome b-c1 complex contains 10 subunits; 3 respiratory subunits, 2 core proteins and 5 low-molecular weight proteins. Cytochrome b-c1 complex is a homodimer. Requires heme b as cofactor.

The protein resides in the mitochondrion inner membrane. Component of the ubiquinol-cytochrome c reductase complex (complex III or cytochrome b-c1 complex) that is part of the mitochondrial respiratory chain. The b-c1 complex mediates electron transfer from ubiquinol to cytochrome c. Contributes to the generation of a proton gradient across the mitochondrial membrane that is then used for ATP synthesis. The sequence is that of Cytochrome b (cob) from Aspergillus fumigatus (Neosartorya fumigata).